We begin with the raw amino-acid sequence, 351 residues long: S-adenosylmethionine:tRNA ribosyltransferase-isomerase (351 aa).

This sequence belongs to the QueA family. In terms of assembly, monomer.

The protein resides in the cytoplasm. The enzyme catalyses 7-aminomethyl-7-carbaguanosine(34) in tRNA + S-adenosyl-L-methionine = epoxyqueuosine(34) in tRNA + adenine + L-methionine + 2 H(+). It participates in tRNA modification; tRNA-queuosine biosynthesis. Its function is as follows. Transfers and isomerizes the ribose moiety from AdoMet to the 7-aminomethyl group of 7-deazaguanine (preQ1-tRNA) to give epoxyqueuosine (oQ-tRNA). This is S-adenosylmethionine:tRNA ribosyltransferase-isomerase from Hyphomonas neptunium (strain ATCC 15444).